The chain runs to 156 residues: Small ribosomal subunit protein uS7 (156 aa).

Belongs to the universal ribosomal protein uS7 family. In terms of assembly, part of the 30S ribosomal subunit. Contacts proteins S9 and S11.

One of the primary rRNA binding proteins, it binds directly to 16S rRNA where it nucleates assembly of the head domain of the 30S subunit. Is located at the subunit interface close to the decoding center, probably blocks exit of the E-site tRNA. In Maridesulfovibrio salexigens (strain ATCC 14822 / DSM 2638 / NCIMB 8403 / VKM B-1763) (Desulfovibrio salexigens), this protein is Small ribosomal subunit protein uS7.